We begin with the raw amino-acid sequence, 520 residues long: Glucose starvation modulator protein 1 (520 aa).

A DNA-binding region (zn(2)-C6 fungal-type) is located at residues 20–48 (CSFCHSKHLQCSNNRPCKNCVKRNIADQC). Disordered regions lie at residues 63–104 (AKNK…SSGR) and 194–213 (PASPTPSSTSEYQTIPPNEM). A compositionally biased stretch (low complexity) spans 74–85 (SLESSSSPFSPL). Positions 90 to 104 (INSQSSQPLDPSSGR) are enriched in polar residues. One can recognise a PAS domain in the interval 376-445 (DYEKLSHLNS…FKLFKSVAVG (70 aa)).

Belongs to the ERT1/acuK family.

The protein localises to the nucleus. In terms of biological role, transcription factor which regulates nonfermentable carbon utilization. This is Glucose starvation modulator protein 1 (GSM1) from Meyerozyma guilliermondii (strain ATCC 6260 / CBS 566 / DSM 6381 / JCM 1539 / NBRC 10279 / NRRL Y-324) (Yeast).